The chain runs to 575 residues: Putative diflavin flavoprotein A 4 (575 aa).

A zinc metallo-hydrolase region spans residues 41–234 (QRGTTANSYL…LGARSYAPGH (194 aa)). The region spanning 263 to 405 (VALLYTSAYG…AGATFAQTLK (143 aa)) is the Flavodoxin-like domain. The interval 429 to 575 (VGRIIGSLCV…AVEHRKSGSH (147 aa)) is flavodoxin-reductase-like.

The protein in the N-terminal section; belongs to the zinc metallo-hydrolase group 3 family. This sequence in the C-terminal section; belongs to the flavodoxin reductase family. Fe cation is required as a cofactor.

In terms of biological role, mediates electron transfer from NADH to oxygen, reducing it to water. This modular protein has 3 redox cofactors, in other organisms the same activity requires 2 or 3 proteins. The chain is Putative diflavin flavoprotein A 4 (dfa4) from Nostoc sp. (strain PCC 7120 / SAG 25.82 / UTEX 2576).